The chain runs to 995 residues: Probable copper-transporting ATPase HMA5 (995 aa).

Topologically, residues 1–299 (MATKLLSLTC…QGEIKQYYKS (299 aa)) are cytoplasmic. 2 consecutive HMA domains span residues 51-117 (SRAV…FEAS) and 129-195 (QVCR…FEAV). Positions 62, 65, 140, and 143 each coordinate Cu(+). In terms of domain architecture, HMA 3; degenerate spans 204 to 270 (SKIDLKIDGE…VIESTVFGHS (67 aa)). A helical membrane pass occupies residues 300 to 321 (FLWSLVFTVPVFLTAMVFMYIP). The Extracellular segment spans residues 322–340 (GIKDLLMFKVINMLTVGEI). A helical membrane pass occupies residues 341–360 (IRCVLATPVQFVIGWRFYTG). The Cytoplasmic portion of the chain corresponds to 361–367 (SYKALRR). A helical membrane pass occupies residues 368 to 388 (GSANMDVLIALGTNAAYFYSL). The Extracellular portion of the chain corresponds to 389-406 (YTVLRAATSPDFKGVDFF). A helical membrane pass occupies residues 407–427 (ETSAMLISFIILGKYLEVMAK). Residues 428-561 (GKTSQAIAKL…KAPVQKLADR (134 aa)) are Cytoplasmic-facing. The helical transmembrane segment at 562-584 (ISKFFVPLVIFLSFSTWLAWFLA) threads the bilayer. Residues 585 to 605 (GKLHWYPESWIPSSMDSFELA) lie on the Extracellular side of the membrane. Residues 606–623 (LQFGISVMVIACPCALGL) traverse the membrane as a helical segment. The Cytoplasmic portion of the chain corresponds to 624–920 (ATPTAVMVGT…DLSRKTFSRI (297 aa)). The active-site 4-aspartylphosphate intermediate is aspartate 661. 2 residues coordinate Mg(2+): aspartate 866 and aspartate 870. A helical membrane pass occupies residues 921–940 (RLNYVWALGYNLMGIPIAAG). The Extracellular segment spans residues 941–952 (VLFPGTRFRLPP). The helical transmembrane segment at 953-971 (WIAGAAMAASSVSVVCCSL) threads the bilayer. Topologically, residues 972-995 (LLKNYKRPKKLDHLEIREIQVERV) are cytoplasmic.

This sequence belongs to the cation transport ATPase (P-type) (TC 3.A.3) family. Type IB subfamily. Interacts with ATX1. As to expression, expressed in roots and flowers.

It is found in the membrane. The enzyme catalyses Cu(+)(in) + ATP + H2O = Cu(+)(out) + ADP + phosphate + H(+). Involved in copper import into the cell. May play a role in copper detoxification in roots. The sequence is that of Probable copper-transporting ATPase HMA5 (HMA5) from Arabidopsis thaliana (Mouse-ear cress).